A 341-amino-acid polypeptide reads, in one-letter code: Uroporphyrinogen decarboxylase (341 aa).

Substrate is bound by residues 25–29, phenylalanine 44, aspartate 74, tyrosine 151, serine 206, and histidine 318; that span reads RQAGR.

It belongs to the uroporphyrinogen decarboxylase family. In terms of assembly, homodimer.

It localises to the cytoplasm. It carries out the reaction uroporphyrinogen III + 4 H(+) = coproporphyrinogen III + 4 CO2. It functions in the pathway porphyrin-containing compound metabolism; protoporphyrin-IX biosynthesis; coproporphyrinogen-III from 5-aminolevulinate: step 4/4. Catalyzes the decarboxylation of four acetate groups of uroporphyrinogen-III to yield coproporphyrinogen-III. This Christiangramia forsetii (strain DSM 17595 / CGMCC 1.15422 / KT0803) (Gramella forsetii) protein is Uroporphyrinogen decarboxylase.